The following is a 362-amino-acid chain: Cobalt-precorrin-5B C(1)-methyltransferase (362 aa).

The protein belongs to the CbiD family.

It catalyses the reaction Co-precorrin-5B + S-adenosyl-L-methionine = Co-precorrin-6A + S-adenosyl-L-homocysteine. Its pathway is cofactor biosynthesis; adenosylcobalamin biosynthesis; cob(II)yrinate a,c-diamide from sirohydrochlorin (anaerobic route): step 6/10. In terms of biological role, catalyzes the methylation of C-1 in cobalt-precorrin-5B to form cobalt-precorrin-6A. This chain is Cobalt-precorrin-5B C(1)-methyltransferase, found in Burkholderia orbicola (strain MC0-3).